Reading from the N-terminus, the 499-residue chain is Proline--tRNA ligase (499 aa).

The protein belongs to the class-II aminoacyl-tRNA synthetase family. ProS type 3 subfamily. Homodimer.

The protein resides in the cytoplasm. It carries out the reaction tRNA(Pro) + L-proline + ATP = L-prolyl-tRNA(Pro) + AMP + diphosphate. In terms of biological role, catalyzes the attachment of proline to tRNA(Pro) in a two-step reaction: proline is first activated by ATP to form Pro-AMP and then transferred to the acceptor end of tRNA(Pro). In Bdellovibrio bacteriovorus (strain ATCC 15356 / DSM 50701 / NCIMB 9529 / HD100), this protein is Proline--tRNA ligase.